The sequence spans 364 residues: Natterin-3 (364 aa).

An N-terminal signal peptide occupies residues 1–18 (MKLSVLVVTLLAVSWTSA). The propeptide occupies 19–42 (QPETFSIQTKEANMNPEPANIRVA).

It belongs to the natterin family. Contains 4 disulfide bonds. As to expression, expressed by the venom gland.

The protein resides in the secreted. Inhibited by tissue-kallikrein inhibitor TKI and trasylol. Plasma kallikrein inhibitor PKSI527 and classical inhibitors of serine-, metallo-, thiol- or aspartate-peptidases evokes a minor inhibition of the peptide digestion. In terms of biological role, shows nociceptive, edema-inducing and kininogenase activity with release of kallidin from low molecular weight kininogen. The cleavage occurs at Met-Lys bonds. This is Natterin-3 from Thalassophryne nattereri (Copper Joe toadfish).